Reading from the N-terminus, the 150-residue chain is Macrodomain Ter protein (150 aa).

It belongs to the MatP family. As to quaternary structure, homodimer.

The protein resides in the cytoplasm. In terms of biological role, required for spatial organization of the terminus region of the chromosome (Ter macrodomain) during the cell cycle. Prevents early segregation of duplicated Ter macrodomains during cell division. Binds specifically to matS, which is a 13 bp signature motif repeated within the Ter macrodomain. The polypeptide is Macrodomain Ter protein (Klebsiella pneumoniae (strain 342)).